Here is a 177-residue protein sequence, read N- to C-terminus: Copper-binding regulatory protein cuf2 (177 aa).

Positions 1–40 form a DNA-binding region, copper-fist; it reads MIIIDGKNYACVVCLRGHRGSSCQHQERALIEVRTRGRPL. Residues cysteine 11, cysteine 14, cysteine 23, and histidine 25 each contribute to the Zn(2+) site.

It localises to the nucleus. This Schizosaccharomyces pombe (strain 972 / ATCC 24843) (Fission yeast) protein is Copper-binding regulatory protein cuf2 (cuf2).